Here is a 484-residue protein sequence, read N- to C-terminus: L-carnitine dehydrogenase/betainyl-CoA thioesterase (484 aa).

The interval 1 to 322 (MKIAAIGGGV…ENRFYARNGK (322 aa)) is L-carnitine dehydrogenase. 7–12 (GGGVIG) is an NAD(+) binding site. The interval 323-484 (VQADYPLRLH…RAVRLKETSA (162 aa)) is betainyl-CoA thioesterase.

The protein in the N-terminal section; belongs to the 3-hydroxyacyl-CoA dehydrogenase family. L-carnitine dehydrogenase subfamily. In the C-terminal section; belongs to the betainyl-CoA thioesterase family. In terms of assembly, homodimer.

It is found in the cytoplasm. The catalysed reaction is carnitine + NAD(+) = 3-dehydrocarnitine + NADH + H(+). It carries out the reaction N,N,N-trimethylglycyl-CoA + H2O = glycine betaine + CoA + H(+). It participates in amine and polyamine metabolism; carnitine metabolism. Functionally, multifunctional enzyme that catalyzes the NAD(+)-dependent oxidation of L-carnitine to 3-dehydrocarnitine and the cleavage of betainyl-CoA (N,N,N-trimethylglycyl-CoA) into glycine betaine and coenzyme A. The protein is L-carnitine dehydrogenase/betainyl-CoA thioesterase of Agrobacterium fabrum (strain C58 / ATCC 33970) (Agrobacterium tumefaciens (strain C58)).